We begin with the raw amino-acid sequence, 418 residues long: Serine protease inhibitor A3M (418 aa).

An N-terminal signal peptide occupies residues 1-20 (MAFIAALGILMAGICPTVLC). N-linked (GlcNAc...) asparagine glycans are attached at residues Asn-104, Asn-184, and Asn-269. The tract at residues 367–392 (GTEAAAATGFIFGFRSRRLQTMTVQF) is RCL.

Belongs to the serpin family. Expressed in liver and testis.

It is found in the secreted. The sequence is that of Serine protease inhibitor A3M (Serpina3m) from Mus musculus (Mouse).